Consider the following 471-residue polypeptide: MPSSGDAAGRRPHVVLIPSAGMGHLVPFGRLAVALSSGHGCDVSLVTVLPTVSTAESKHLDALFDAFPAVRRLDFELAPFDASEFPGADPFFLRFEAMRRSAPLLGPLLTGAGASALATDIALTSVVIPVAKEQGLPCHILFTASAAMLSLCAYFPTYLDANAGGGGGVGDVDIPGVYRIPKASIPQALHDPNHLFTRQFVANGRSLTSAAGILVNTFDALEPEAVAALQQGKVASGFPPVFAVGPLLPASNQAKDPQANYMEWLDAQPARSVVYVSFGSRKAISREQLRELAAGLEGSGHRFLWVVKSTVVDRDDAAELGELLDEGFLERVEKRGLVTKAWVDQEEVLKHESVALFVSHCGWNSVTEAAASGVPVLALPRFGDQRVNSGVVARAGLGVWADTWSWEGEAGVIGAEEISEKVKAAMADEALRMKAASLAEAAAKAVAGGGSSHRCLAEFARLCQGGTCRTN.

His-24 serves as the catalytic Proton acceptor. An an anthocyanidin-binding site is contributed by His-24. Asp-120 (charge relay) is an active-site residue. Thr-143 contacts UDP-alpha-D-glucose. Positions 280-281 (SR) are UDP. Residues Val-343, Gln-345, His-360, Trp-363, Asn-364, Ser-365, and Glu-368 each coordinate UDP-alpha-D-glucose. Residue Gly-383 coordinates an anthocyanidin. The UDP-alpha-D-glucose site is built by Asp-384 and Gln-385.

The protein belongs to the UDP-glycosyltransferase family.

The catalysed reaction is a 3'-hydro-2'-hydroxy-beta-oxodihydrochalcone + UDP-alpha-D-glucose = a 3'-(beta-D-glucopyranosyl)-2'-hydroxy-beta-oxodihydrochalcone + UDP + H(+). UDP-glucose-dependent glucosyltransferase catalyzing the c-glucosylation of 2-hydroxyflavanones. Acts preferentially on the dibenzoylmethane tautomers formed in equilibrium with 2-hydroxyflavanones. No activity with naringenin or naringenin chalcone. The protein is UDP-glycosyltransferase CGT of Oryza sativa subsp. indica (Rice).